Reading from the N-terminus, the 739-residue chain is Prestin (739 aa).

Topologically, residues 1–76 (MEHVTVSEEP…PILTWLPSYP (76 aa)) are cytoplasmic. Residues 77–106 (LKEYLFGDIVSGISTGVMQLPQGLAYAMLA) traverse the membrane as a helical segment. Residues 107–109 (AVP) lie on the Extracellular side of the membrane. Residues 110–127 (PVFGLYSSFYPVLLYTFF) form a helical membrane-spanning segment. At 128–138 (GTSKHISIGTF) the chain is on the cytoplasmic side. A helical transmembrane segment spans residues 139–152 (AVISLMIGGVAVRE). The Extracellular portion of the chain corresponds to 153–169 (APDSMFMVNGTNSSLVV). N-linked (GlcNAc...) asparagine glycosylation is found at asparagine 161 and asparagine 164. The helical transmembrane segment at 170–199 (NIEARDSRRVEVVVALTTLVGIIQFVLGLL) threads the bilayer. At 200-209 (RFGFLAIYLT) the chain is on the cytoplasmic side. Residues 210 to 233 (EPLVRGFTTAAAVHVSVSQLKYLL) traverse the membrane as a helical segment. Residues 234-244 (GVKTARFNGPL) are Extracellular-facing. The helical intramembrane region spans 245–256 (SVVYSLDAVLRN). The Extracellular segment spans residues 257-261 (IADTN). A helical membrane pass occupies residues 262–285 (IVTLIIGLGCTVFLYIIKQLNERF). Topologically, residues 286 to 294 (KKKLLIPIP) are cytoplasmic. The helical transmembrane segment at 295–310 (GEIIVVIVSTGISYGM) threads the bilayer. At 311–335 (LMSENYGVDVVGKIPTGLLPPKVPD) the chain is on the extracellular side. The helical transmembrane segment at 336 to 370 (FSVFPNLFADAVPIAVVGFSITISLAKTFALKYGY) threads the bilayer. Topologically, residues 371 to 373 (SVD) are cytoplasmic. The helical transmembrane segment at 374 to 391 (GNQELIALGLCNFVSSFF) threads the bilayer. The Extracellular segment spans residues 392 to 399 (HTFVVTAS). Residues 400 to 409 (MSRSLVQEST) form a helical membrane-spanning segment. Residue serine 401 coordinates salicylate. At 410–413 (GGHT) the chain is on the cytoplasmic side. Residues 414 to 435 (EIAGLLASLLVLLVVVAIGFVF) form a helical membrane-spanning segment. The Extracellular portion of the chain corresponds to 436–439 (QPLP). A helical transmembrane segment spans residues 440–467 (TTVLAAIIMVNLLGMFKQTRDIPVLWRK). Position 468 (serine 468) is a topological domain, cytoplasmic. Residues 469–484 (KIELAIWLVSFFASVL) traverse the membrane as a helical segment. The Extracellular segment spans residues 485 to 486 (LG). Residues 487–507 (LDYGLAVAMAFAILTVIYRTQ) traverse the membrane as a helical segment. An extended region for STAS domain region spans residues 508–731 (RPKNVVLGQI…AVLQCKRWRD (224 aa)). Over 508 to 739 (RPKNVVLGQI…RDLPVHPNIH (232 aa)) the chain is Cytoplasmic. The 199-residue stretch at 528–726 (EYEEAEECSG…PTIHDAVLQC (199 aa)) folds into the STAS domain.

The protein belongs to the SLC26A/SulP transporter (TC 2.A.53) family. In terms of assembly, homodimer. Interacts (via STAS domain) with CALM; this interaction is calcium-dependent. Expressed in hair cells of the auditory organs.

The protein resides in the cell membrane. It carries out the reaction oxalate(in) + chloride(out) = oxalate(out) + chloride(in). The enzyme catalyses sulfate(out) + chloride(in) = sulfate(in) + chloride(out). Sulfate/chloride antiport activity is inhibited by salicylate; this inhibition is reversible. Functionally, electrogenic antiporter that exchanges sulfate or oxalate for chloride ion in a strictly coupled manner with a 1:1 stoichiometry. Adopts a dynamic conformation, which alternates between the exposure of the central binding site to the extra- and intracellular solutions leading to an inward-to-outward conformational transition during the transport cycle. Generates voltage-dependent charge movements resembling to the non-linear capacitance (NLC) of the cell membrane, but which are not associated to electromotile activity. This Danio rerio (Zebrafish) protein is Prestin.